A 131-amino-acid chain; its full sequence is Small ribosomal subunit protein uS8 (131 aa).

The protein belongs to the universal ribosomal protein uS8 family. In terms of assembly, part of the 30S ribosomal subunit. Contacts proteins S5 and S12.

Its function is as follows. One of the primary rRNA binding proteins, it binds directly to 16S rRNA central domain where it helps coordinate assembly of the platform of the 30S subunit. This chain is Small ribosomal subunit protein uS8, found in Hamiltonella defensa subsp. Acyrthosiphon pisum (strain 5AT).